The following is a 149-amino-acid chain: Small ribosomal subunit protein bS6 (149 aa).

The segment at 94 to 149 (EKHEEGPSAMMQKRDRDDRPRRDGDRPDRGGFGDRGPRPDRGDRDDRPRRPREDRA) is disordered.

Belongs to the bacterial ribosomal protein bS6 family.

In terms of biological role, binds together with bS18 to 16S ribosomal RNA. The sequence is that of Small ribosomal subunit protein bS6 from Sinorhizobium fredii (strain NBRC 101917 / NGR234).